The chain runs to 319 residues: Plastid lipid-associated protein 2, chloroplastic (319 aa).

A chloroplast-targeting transit peptide spans 1–59 (MATVQFFNQFPCKTRVQSSANSKPLSKPPSSLVPMSALTRRPSFPPGEFAVSRSDFRVR). The tract at residues 17-39 (QSSANSKPLSKPPSSLVPMSALT) is disordered. The segment covering 18 to 36 (SSANSKPLSKPPSSLVPMS) has biased composition (low complexity).

Belongs to the PAP/fibrillin family. Expressed almost exclusively in petals. Very weak expression in all other organs.

It localises to the plastid. It is found in the chloroplast. In terms of biological role, may stabilize the accumulated carotenoid structures. The chain is Plastid lipid-associated protein 2, chloroplastic (PAP2) from Brassica campestris (Field mustard).